The primary structure comprises 286 residues: Phosphatidylserine decarboxylase proenzyme (286 aa).

Active-site charge relay system; for autoendoproteolytic cleavage activity residues include Asp90, His147, and Ser250. Ser250 functions as the Schiff-base intermediate with substrate; via pyruvic acid; for decarboxylase activity in the catalytic mechanism. The residue at position 250 (Ser250) is a Pyruvic acid (Ser); by autocatalysis.

Belongs to the phosphatidylserine decarboxylase family. PSD-B subfamily. Prokaryotic type I sub-subfamily. In terms of assembly, heterodimer of a large membrane-associated beta subunit and a small pyruvoyl-containing alpha subunit. Requires pyruvate as cofactor. Is synthesized initially as an inactive proenzyme. Formation of the active enzyme involves a self-maturation process in which the active site pyruvoyl group is generated from an internal serine residue via an autocatalytic post-translational modification. Two non-identical subunits are generated from the proenzyme in this reaction, and the pyruvate is formed at the N-terminus of the alpha chain, which is derived from the carboxyl end of the proenzyme. The autoendoproteolytic cleavage occurs by a canonical serine protease mechanism, in which the side chain hydroxyl group of the serine supplies its oxygen atom to form the C-terminus of the beta chain, while the remainder of the serine residue undergoes an oxidative deamination to produce ammonia and the pyruvoyl prosthetic group on the alpha chain. During this reaction, the Ser that is part of the protease active site of the proenzyme becomes the pyruvoyl prosthetic group, which constitutes an essential element of the active site of the mature decarboxylase.

It is found in the cell membrane. The enzyme catalyses a 1,2-diacyl-sn-glycero-3-phospho-L-serine + H(+) = a 1,2-diacyl-sn-glycero-3-phosphoethanolamine + CO2. The protein operates within phospholipid metabolism; phosphatidylethanolamine biosynthesis; phosphatidylethanolamine from CDP-diacylglycerol: step 2/2. Catalyzes the formation of phosphatidylethanolamine (PtdEtn) from phosphatidylserine (PtdSer). The protein is Phosphatidylserine decarboxylase proenzyme of Psychromonas ingrahamii (strain DSM 17664 / CCUG 51855 / 37).